Consider the following 480-residue polypeptide: UDP-glycosyltransferase 71C5 (480 aa).

Residues S290, 349–351 (APQ), 366–374 (HCGWNSVQE), and 388–391 (YAEQ) each bind UDP-alpha-D-glucose.

It belongs to the UDP-glycosyltransferase family.

Functionally, possesses low quercetin 3-O-glucosyltransferase activity in vitro. The protein is UDP-glycosyltransferase 71C5 (UGT71C5) of Arabidopsis thaliana (Mouse-ear cress).